Here is a 582-residue protein sequence, read N- to C-terminus: Leucine-rich repeat protein SHOC-2 (582 aa).

Composition is skewed to basic and acidic residues over residues 1-29 (MSSS…KESK) and 36-57 (KESK…KKES). Residues 1–88 (MSSSLGKEKD…PGTRKKSSNA (88 aa)) form a disordered region. The RVxF motif; important for interaction with PP1c signature appears at 63-66 (GVAF). 20 LRR repeats span residues 101-122 (NSMR…VKEL), 124-145 (QLTE…VGCL), 147-169 (NLMT…DNLK), 170-191 (KLRM…VYRL), 193-215 (SLTT…KNLP), 216-237 (KLSM…IGEL), 239-260 (NLIT…IGNC), 262-283 (QITN…IGNL), 285-307 (SLNR…AKCS), 308-329 (ALEE…LLSS), 332-353 (KLNS…GPSQ), 356-377 (TIYS…IFSR), 380-400 (VLSK…DFGT), 403-424 (SMVE…VSGL), 426-448 (SLEV…GNLR), 449-470 (KLRE…IAYL), 472-494 (DLQK…GHLT), 495-516 (NLTH…IGTL), 518-540 (NLEE…LALC), and 542-563 (KLSI…IVAG).

The protein belongs to the SHOC2 family. As to quaternary structure, component of the SHOC2-MRAS-PP1c (SMP) complex consisting of SHOC2, GTP-bound M-Ras/MRAS and the catalytic subunit of protein phosphatase 1 (either PPP1CA, PPP1CB or PPP1CC). SHOC2 and PP1c preferably bind M-Ras/MRAS, but they also bind K-Ras/KRAS, N-Ras/NRAS and H-Ras/HRAS; these interactions are GTP-dependent and both SHOC2 and PP1c are required to form a stable complex. Interacts with PP1c in the absence of Ras GTPases. Interacts with M-Ras/MRAS and RAF1. Interacts with ERBIN; disrupts the interaction with RAF1 and Ras, preventing the activation of the Ras signaling pathway. Interacts with LZTR1.

The protein resides in the cytoplasm. It is found in the nucleus. Functionally, core component of the SHOC2-MRAS-PP1c (SMP) holophosphatase complex that regulates activation of the MAPK pathway. Acts as a scaffolding protein in the SMP complex. The SMP complex specifically dephosphorylates the inhibitory phosphorylation at 'Ser-259' of RAF1 kinase, 'Ser-365' of BRAF kinase and 'Ser-214' of ARAF kinase, stimulating their kinase activities. The SMP complex enhances the dephosphorylation activity and substrate specificity of PP1c. This chain is Leucine-rich repeat protein SHOC-2 (Shoc2), found in Mus musculus (Mouse).